Reading from the N-terminus, the 310-residue chain is MPSNNSSFLDIDDDLEGVDDFGNEPNPFDDATVPDSPNMNNSTAGKGSEFYNTTGSKAESAPLQGQMDPPAYDQVIGQNDNDGLGRNGLRPGLINYYSKYFQIDLTQFKKRLSAVLTFRNDHNSESNEDNTDLYGAVWITATVVMINFTMSRGLNFIISDVIEGVKTGEDIDRASQFKKLLHSIWLFYGYTFGVPFITMQVLNRDEHSERNRSFKSVPELISVYGYANLIWIPVCVILNILDMSKRLRTVQAIQWAIVALGWAQSSYFLNSQISSNNNTETQSNGKFSLSIIVVVALHTLFCLLFRFIIF.

Residues 1 to 84 form a disordered region; the sequence is MPSNNSSFLD…VIGQNDNDGL (84 aa). A compositionally biased stretch (acidic residues) spans 10–22; it reads DIDDDLEGVDDFG. Polar residues predominate over residues 35-57; sequence DSPNMNNSTAGKGSEFYNTTGSK. The residue at position 60 (Ser60) is a Phosphoserine. The next 5 membrane-spanning stretches (helical) occupy residues 131–151, 181–201, 220–240, 249–269, and 290–310; these read TDLY…FTMS, LHSI…TMQV, LISV…ILNI, TVQA…SYFL, and SIIV…FIIF.

This sequence belongs to the YIP1 family. In terms of assembly, interacts with SNX3, TVP18, TVP23, YIP1 and YIP4. Interacts with SEC4; The C-terminal cysteines in the Rab GTPase SEC4 are essential for the interaction. Interacts with YPT1, YPT6, YPT7, YPT10, YPT11, YPT31, YPT32 and YPT52; These proteins are all Rab GTPases.

The protein localises to the membrane. Functionally, possible role in vesicle-mediated transport. May be involved in proper membrane localization of Rab GTPases. The sequence is that of Protein YIP5 (YIP5) from Saccharomyces cerevisiae (strain ATCC 204508 / S288c) (Baker's yeast).